Here is a 439-residue protein sequence, read N- to C-terminus: Serine--tRNA ligase (439 aa).

247–249 lines the L-serine pocket; sequence TSE. 278 to 280 is a binding site for ATP; sequence RSE. Glu-301 serves as a coordination point for L-serine. 365–368 contacts ATP; it reads EISS. An L-serine-binding site is contributed by Ser-400.

Belongs to the class-II aminoacyl-tRNA synthetase family. Type-1 seryl-tRNA synthetase subfamily. Homodimer. The tRNA molecule binds across the dimer.

It localises to the cytoplasm. It carries out the reaction tRNA(Ser) + L-serine + ATP = L-seryl-tRNA(Ser) + AMP + diphosphate + H(+). It catalyses the reaction tRNA(Sec) + L-serine + ATP = L-seryl-tRNA(Sec) + AMP + diphosphate + H(+). Its pathway is aminoacyl-tRNA biosynthesis; selenocysteinyl-tRNA(Sec) biosynthesis; L-seryl-tRNA(Sec) from L-serine and tRNA(Sec): step 1/1. Functionally, catalyzes the attachment of serine to tRNA(Ser). Is also able to aminoacylate tRNA(Sec) with serine, to form the misacylated tRNA L-seryl-tRNA(Sec), which will be further converted into selenocysteinyl-tRNA(Sec). The polypeptide is Serine--tRNA ligase (Paracidovorax citrulli (strain AAC00-1) (Acidovorax citrulli)).